The sequence spans 560 residues: Membrane protein insertase YidC (560 aa).

Residues 1–21 form a helical membrane-spanning segment; it reads MDIKRTILIAALAVVSYVMVL. The interval 42–66 is disordered; that stretch reads VAPGLPDGVPAGNNGASADVPSANA. 5 consecutive transmembrane segments (helical) span residues 341 to 361, 367 to 387, 437 to 457, 468 to 488, and 515 to 535; these read LELT…FWLL, LLGN…GLFF, LGGC…YWVL, WILW…PIIM, and PIIF…YWVV.

Belongs to the OXA1/ALB3/YidC family. Type 1 subfamily. In terms of assembly, interacts with the Sec translocase complex via SecD. Specifically interacts with transmembrane segments of nascent integral membrane proteins during membrane integration.

The protein resides in the cell inner membrane. In terms of biological role, required for the insertion and/or proper folding and/or complex formation of integral membrane proteins into the membrane. Involved in integration of membrane proteins that insert both dependently and independently of the Sec translocase complex, as well as at least some lipoproteins. Aids folding of multispanning membrane proteins. The chain is Membrane protein insertase YidC from Pseudomonas putida (strain ATCC 47054 / DSM 6125 / CFBP 8728 / NCIMB 11950 / KT2440).